Here is a 157-residue protein sequence, read N- to C-terminus: Protein-export protein SecB (157 aa).

This sequence belongs to the SecB family. Homotetramer, a dimer of dimers. One homotetramer interacts with 1 SecA dimer.

It localises to the cytoplasm. Its function is as follows. One of the proteins required for the normal export of preproteins out of the cell cytoplasm. It is a molecular chaperone that binds to a subset of precursor proteins, maintaining them in a translocation-competent state. It also specifically binds to its receptor SecA. The sequence is that of Protein-export protein SecB from Shewanella oneidensis (strain ATCC 700550 / JCM 31522 / CIP 106686 / LMG 19005 / NCIMB 14063 / MR-1).